The primary structure comprises 176 residues: MSAGGAPVPPPPNPAMSFPAPRVTLPAGPDILRTYSGAFVCLEIVFGGLVWILVASSNVPLPLLQGWVMFVSVTAFVCSLLFLGVFLSGVVTQINANWNFLDFAYHFTVFVFYFGAFLLEAATTSLHDLRCNRTMTVQPLLSDNQYNINVAATIFAFVTTACYGCSLGLALRRWRP.

Topologically, residues 1–34 (MSAGGAPVPPPPNPAMSFPAPRVTLPAGPDILRT) are cytoplasmic. Positions 31–175 (ILRTYSGAFV…SLGLALRRWR (145 aa)) constitute an MARVEL domain. The chain crosses the membrane as a helical span at residues 35–55 (YSGAFVCLEIVFGGLVWILVA). At 56-66 (SSNVPLPLLQG) the chain is on the lumenal side. A helical membrane pass occupies residues 67 to 87 (WVMFVSVTAFVCSLLFLGVFL). At 88-102 (SGVVTQINANWNFLD) the chain is on the cytoplasmic side. The chain crosses the membrane as a helical span at residues 103–123 (FAYHFTVFVFYFGAFLLEAAT). Residues 124 to 149 (TSLHDLRCNRTMTVQPLLSDNQYNIN) lie on the Lumenal side of the membrane. N-linked (GlcNAc...) asparagine glycosylation occurs at asparagine 132. Residues 150–170 (VAATIFAFVTTACYGCSLGLA) traverse the membrane as a helical segment. The Cytoplasmic segment spans residues 171 to 176 (LRRWRP).

This sequence belongs to the MAL family. In terms of assembly, interacts with TPD52L2.

The protein resides in the cell membrane. It localises to the apical cell membrane. Member of the machinery of polarized transport. Required for the indirect transcytotic route at the step of the egress of the transcytosing cargo from perinuclear endosomes in order for it to travel to the apical surface via a raft-dependent pathway. The chain is Protein MAL2 (MAL2) from Bos taurus (Bovine).